We begin with the raw amino-acid sequence, 555 residues long: Luciferin 2-monooxygenase (555 aa).

Positions 1–11 (MKIIILSVILA) are cleaved as a signal peptide. VWFD domains are found at residues 80 to 266 (IECR…EYCK) and 319 to 494 (GTCV…RLCN). 4 disulfides stabilise this stretch: cysteine 82/cysteine 222, cysteine 321/cysteine 454, cysteine 343/cysteine 493, and cysteine 352/cysteine 451. Asparagine 186 and asparagine 408 each carry an N-linked (GlcNAc...) asparagine glycan.

Post-translationally, the cysteine residues presumably exist in intramolecular disulfide bridges. In terms of processing, the N-terminus is blocked.

The catalysed reaction is Cypridina luciferin + O2 = oxidized Cypridina luciferin + hnu + CO2. In Vargula hilgendorfii (Sea firefly), this protein is Luciferin 2-monooxygenase.